Reading from the N-terminus, the 95-residue chain is Aspartyl/glutamyl-tRNA(Asn/Gln) amidotransferase subunit C (95 aa).

The protein belongs to the GatC family. As to quaternary structure, heterotrimer of A, B and C subunits.

It catalyses the reaction L-glutamyl-tRNA(Gln) + L-glutamine + ATP + H2O = L-glutaminyl-tRNA(Gln) + L-glutamate + ADP + phosphate + H(+). The catalysed reaction is L-aspartyl-tRNA(Asn) + L-glutamine + ATP + H2O = L-asparaginyl-tRNA(Asn) + L-glutamate + ADP + phosphate + 2 H(+). In terms of biological role, allows the formation of correctly charged Asn-tRNA(Asn) or Gln-tRNA(Gln) through the transamidation of misacylated Asp-tRNA(Asn) or Glu-tRNA(Gln) in organisms which lack either or both of asparaginyl-tRNA or glutaminyl-tRNA synthetases. The reaction takes place in the presence of glutamine and ATP through an activated phospho-Asp-tRNA(Asn) or phospho-Glu-tRNA(Gln). The sequence is that of Aspartyl/glutamyl-tRNA(Asn/Gln) amidotransferase subunit C from Caulobacter sp. (strain K31).